The primary structure comprises 628 residues: EIN3-binding F-box protein 1 (628 aa).

The 49-residue stretch at Pro61–Val109 folds into the F-box domain.

As to quaternary structure, part of a SCF (SKP1-cullin-F-box) protein ligase complex. Interacts with CUL1, SKP1A/ASK1, SKP1B/ASK2, ASK11, ASK12, ASK13, ASK18, EIN3, and EIL1. Ubiquitous.

It localises to the nucleus. It participates in protein modification; protein ubiquitination. In terms of biological role, component of SCF(EBF1) E3 ubiquitin ligase complexes, which may mediate the ubiquitination and subsequent proteasomal degradation of target proteins (probably including EIN3 and EIL1). Regulator of the ethylene signaling cascade by modulating the stability of EIN3 and EIL1 proteins. Confers insensitivity to ethylene. The sequence is that of EIN3-binding F-box protein 1 (EBF1) from Arabidopsis thaliana (Mouse-ear cress).